A 214-amino-acid polypeptide reads, in one-letter code: Probable transaldolase (214 aa).

Lys-83 serves as the catalytic Schiff-base intermediate with substrate.

The protein belongs to the transaldolase family. Type 3B subfamily.

Its subcellular location is the cytoplasm. It catalyses the reaction D-sedoheptulose 7-phosphate + D-glyceraldehyde 3-phosphate = D-erythrose 4-phosphate + beta-D-fructose 6-phosphate. The protein operates within carbohydrate degradation; pentose phosphate pathway; D-glyceraldehyde 3-phosphate and beta-D-fructose 6-phosphate from D-ribose 5-phosphate and D-xylulose 5-phosphate (non-oxidative stage): step 2/3. In terms of biological role, transaldolase is important for the balance of metabolites in the pentose-phosphate pathway. The chain is Probable transaldolase from Leptospira interrogans serogroup Icterohaemorrhagiae serovar copenhageni (strain Fiocruz L1-130).